Here is a 370-residue protein sequence, read N- to C-terminus: GMP synthase [glutamine-hydrolyzing] subunit B (370 aa).

The GMPS ATP-PPase domain occupies 3–189 (FDPQKFVDEI…LGLPRDIYNR (187 aa)). 29–35 (SGGVDST) contacts ATP.

In terms of assembly, heterodimer composed of a glutamine amidotransferase subunit (A) and a GMP-binding subunit (B).

It catalyses the reaction XMP + L-glutamine + ATP + H2O = GMP + L-glutamate + AMP + diphosphate + 2 H(+). Its pathway is purine metabolism; GMP biosynthesis; GMP from XMP (L-Gln route): step 1/1. Catalyzes the synthesis of GMP from XMP. The polypeptide is GMP synthase [glutamine-hydrolyzing] subunit B (guaAB) (Sulfurisphaera tokodaii (strain DSM 16993 / JCM 10545 / NBRC 100140 / 7) (Sulfolobus tokodaii)).